Reading from the N-terminus, the 1331-residue chain is Mitogen-activated protein kinase kinase kinase 15 (1331 aa).

A compositionally biased stretch (gly residues) spans 1-13; that stretch reads MEGGGGSGGGGGP. A disordered region spans residues 1 to 61; the sequence is MEGGGGSGGG…GEAEGGRGPR (61 aa). Positions 656-912 constitute a Protein kinase domain; the sequence is NGERVVLGKG…AADLLQEGFL (257 aa). ATP contacts are provided by residues 662–670 and Lys685; that span reads LGKGSYGIV. Residue Asp777 is the Proton acceptor of the active site. Disordered regions lie at residues 934 to 964 and 983 to 1005; these read GTGT…SDAQ and LSVP…EERD. A compositionally biased stretch (low complexity) spans 940-962; the sequence is LPSSGELVGSSSSEHGSISPDSD. Positions 992–1005 are enriched in basic and acidic residues; the sequence is LDDRSTALPPEERD. Positions 1216-1236 form a coiled coil; sequence LVQKEREYQNLLRLILDQKTQ.

This sequence belongs to the protein kinase superfamily. STE Ser/Thr protein kinase family. MAP kinase kinase kinase subfamily. Mg(2+) is required as a cofactor.

The enzyme catalyses L-seryl-[protein] + ATP = O-phospho-L-seryl-[protein] + ADP + H(+). It carries out the reaction L-threonyl-[protein] + ATP = O-phospho-L-threonyl-[protein] + ADP + H(+). With respect to regulation, contains an N-terminal autoinhibitory domain. Activated by phosphorylation at Thr-816, inhibited by phosphorylation at Ser-928. Functionally, serine/threonine kinase which acts as a component of the MAP kinase signal transduction pathway. Once activated, acts as an upstream activator of the p38 MAPK signal transduction cascade through the phosphorylation and activation of several MAP kinase kinases. May function in a signal transduction pathway that is activated by various cell stresses and leads to apoptosis. Involved in phosphorylation of WNK4 in response to osmotic stress or hypotonic low-chloride stimulation via the p38 MAPK signal transduction cascade. This Mus musculus (Mouse) protein is Mitogen-activated protein kinase kinase kinase 15.